A 135-amino-acid polypeptide reads, in one-letter code: Thyrostimulin beta-5 subunit (135 aa).

An N-terminal signal peptide occupies residues 1-19 (MVMPLVLSLALTPPPLCHA). Cystine bridges form between C30/C87, C54/C102, C63/C118, C67/C120, and C123/C130.

This sequence belongs to the glycoprotein hormones subunit beta family. As to quaternary structure, heterodimer with GPHA2; non-covalently-linked. Expressed by the venom duct.

The protein localises to the secreted. The chain is Thyrostimulin beta-5 subunit from Conus victoriae (Queen Victoria cone).